The chain runs to 61 residues: Metallothionein-1D (61 aa).

Residues 1 to 29 (MDPNCSCSTGGSCSCATSCTCKACRCTSC) are beta. 20 residues coordinate a divalent metal cation: Cys5, Cys7, Cys13, Cys15, Cys19, Cys21, Cys24, Cys26, Cys29, Cys33, Cys34, Cys36, Cys37, Cys41, Cys44, Cys48, Cys50, Cys57, Cys59, and Cys60. The tract at residues 30-61 (KKSCCSCCPAGCAKCAQGCICKGASDKCSCCA) is alpha.

The protein belongs to the metallothionein superfamily. Type 1 family. In terms of assembly, monomer.

Functionally, metallothioneins have a high content of cysteine residues that bind various heavy metals; these proteins are transcriptionally regulated by both heavy metals and glucocorticoids. This chain is Metallothionein-1D (MT1D), found in Sus scrofa (Pig).